A 402-amino-acid polypeptide reads, in one-letter code: Protein FAM53A (402 aa).

Ser-119 is subject to Phosphoserine. The interval 170–215 (LVPGLPRRPVSPAGPTSPLTPRPASASSGFVDGSEGSTSSGPPWLS) is disordered. The Nuclear localization signal motif lies at 273–281 (RRVRRKRRR). Phosphoserine occurs at positions 306 and 309. Positions 323 to 333 (TLVSSPCNSQG) are enriched in polar residues. The segment at 323–402 (TLVSSPCNSQ…DLDLEQIENN (80 aa)) is disordered. The segment covering 336 to 345 (GIITPSSSPR) has biased composition (low complexity).

The protein belongs to the FAM53 family.

The protein resides in the nucleus. May play an important role in neural development; the dorsomedial roof of the third ventricle. The polypeptide is Protein FAM53A (Mus musculus (Mouse)).